The sequence spans 317 residues: N-acetyl-gamma-glutamyl-phosphate reductase (317 aa).

Cys136 is a catalytic residue.

The protein belongs to the NAGSA dehydrogenase family. Type 1 subfamily.

The protein resides in the cytoplasm. The enzyme catalyses N-acetyl-L-glutamate 5-semialdehyde + phosphate + NADP(+) = N-acetyl-L-glutamyl 5-phosphate + NADPH + H(+). Its pathway is amino-acid biosynthesis; L-arginine biosynthesis; N(2)-acetyl-L-ornithine from L-glutamate: step 3/4. Functionally, catalyzes the NADPH-dependent reduction of N-acetyl-5-glutamyl phosphate to yield N-acetyl-L-glutamate 5-semialdehyde. In Stenotrophomonas maltophilia (strain R551-3), this protein is N-acetyl-gamma-glutamyl-phosphate reductase.